A 278-amino-acid polypeptide reads, in one-letter code: Checkpoint protein Hus1-like (278 aa).

This sequence belongs to the HUS1 family. In terms of assembly, component of the 9-1-1 checkpoint clamp complex consisting of Rad9 isoform A, Rad1 and Hus1-like; the interactions with Rad1 and Rad9 are direct. This complex probably also forms with Rad9 isoform B, however 9-1-1 complex containing Rad9 isoform A localizes to the nuclear periphery. As to expression, expressed in ovary.

Its subcellular location is the cytoplasm. The protein resides in the nucleus envelope. Functionally, component of the 9-1-1 checkpoint clamp complex. Involved in both meiotic and somatic DNA damage responses. Essential for activation of the meiotic checkpoint in response to double-strand DNA breaks; required for the S-phase checkpoint but not the G2-M phase checkpoint. Involved in double strand break repair by homologous recombination during meiosis; influences the organization of chromosomal DNA in the meiotic nucleus. The polypeptide is Checkpoint protein Hus1-like (Drosophila melanogaster (Fruit fly)).